The following is a 284-amino-acid chain: MTAQLIDGKAIAASLRQQIAKRVAERRQQGLRTPGLAVILVGSDPASQVYVSHKRKDCEEVGFLSQAYDLPANTTQEDLAGLIDRLNDDPNIDGVLLQLPLPEHLDASLLLERIRPDKDVDGFHPYNVGRLAQRIPLLRPCTPKGIMTLLESTGADLYGMDAVVVGASNIVGRPMAMELLLAGCTVTVTHRFTKDLAGHVGRADLVVVAAGKPGLVKGEWIKEGAIVIDVGINRQDDGKLVGDVVYETALPRAGWITPVPGGVGPMTRACLLENTLYAAESLHS.

NADP(+)-binding positions include G166–S168 and I232.

The protein belongs to the tetrahydrofolate dehydrogenase/cyclohydrolase family. In terms of assembly, homodimer.

The catalysed reaction is (6R)-5,10-methylene-5,6,7,8-tetrahydrofolate + NADP(+) = (6R)-5,10-methenyltetrahydrofolate + NADPH. It carries out the reaction (6R)-5,10-methenyltetrahydrofolate + H2O = (6R)-10-formyltetrahydrofolate + H(+). It functions in the pathway one-carbon metabolism; tetrahydrofolate interconversion. Catalyzes the oxidation of 5,10-methylenetetrahydrofolate to 5,10-methenyltetrahydrofolate and then the hydrolysis of 5,10-methenyltetrahydrofolate to 10-formyltetrahydrofolate. In Pseudomonas fluorescens (strain ATCC BAA-477 / NRRL B-23932 / Pf-5), this protein is Bifunctional protein FolD.